Consider the following 436-residue polypeptide: ATP-dependent protease ATPase subunit HslU (436 aa).

ATP-binding positions include I19, G61–E66, D249, E314, and R386.

Belongs to the ClpX chaperone family. HslU subfamily. As to quaternary structure, a double ring-shaped homohexamer of HslV is capped on each side by a ring-shaped HslU homohexamer. The assembly of the HslU/HslV complex is dependent on binding of ATP.

The protein localises to the cytoplasm. Functionally, ATPase subunit of a proteasome-like degradation complex; this subunit has chaperone activity. The binding of ATP and its subsequent hydrolysis by HslU are essential for unfolding of protein substrates subsequently hydrolyzed by HslV. HslU recognizes the N-terminal part of its protein substrates and unfolds these before they are guided to HslV for hydrolysis. In Bartonella bacilliformis (strain ATCC 35685 / KC583 / Herrer 020/F12,63), this protein is ATP-dependent protease ATPase subunit HslU.